An 84-amino-acid polypeptide reads, in one-letter code: Large ribosomal subunit protein bL27 (84 aa).

The protein belongs to the bacterial ribosomal protein bL27 family.

This chain is Large ribosomal subunit protein bL27, found in Buchnera aphidicola subsp. Schizaphis graminum (strain Sg).